Consider the following 262-residue polypeptide: Transmembrane protein 81 (262 aa).

A signal peptide spans 1-30 (MKAVATVFICGSLVLITYLPLVVTSPQTLA). Residues 31 to 225 (IPEKLRQAVG…HLPGWRKKVS (195 aa)) lie on the Extracellular side of the membrane. N-linked (GlcNAc...) asparagine glycosylation occurs at N45. The 89-residue stretch at 83-171 (TNWICGMLHF…VQQLKNLKLV (89 aa)) folds into the Ig-like domain. An intrachain disulfide couples C104 to C160. N-linked (GlcNAc...) asparagine glycosylation is present at N211. The chain crosses the membrane as a helical span at residues 226–246 (LALGVGIAAGVVGGVLVNVAL). Residues 247–262 (CRVLGGTGGNGNLSSL) lie on the Cytoplasmic side of the membrane.

Forms a complex with IZUMO1 and SPACA6 on spermatocyte cell membrane required for fertilization.

It is found in the cell membrane. Essential fertilization factor required for male fertility. Part of a conserved trimeric sperm complex with the essential fertilization factors IZUMO1 and SPACA6 which bridges sperm and oocyte membranes during fertilization by binding to IZUMO1R/JUNO on the oocyte. In Rattus norvegicus (Rat), this protein is Transmembrane protein 81 (Tmem81).